The following is a 179-amino-acid chain: Cell division protein SepF (179 aa).

Residues 18–55 (EDSSLPYEKRDEPVFTPVNSSQEPALPMNQPSQSAGTK) are disordered. Polar residues predominate over residues 34–55 (PVNSSQEPALPMNQPSQSAGTK).

It belongs to the SepF family. In terms of assembly, homodimer. Interacts with FtsZ.

It localises to the cytoplasm. Cell division protein that is part of the divisome complex and is recruited early to the Z-ring. Probably stimulates Z-ring formation, perhaps through the cross-linking of FtsZ protofilaments. Its function overlaps with FtsA. The protein is Cell division protein SepF of Streptococcus pneumoniae (strain ATCC 700669 / Spain 23F-1).